The following is a 298-amino-acid chain: Ornithine carbamoyltransferase (298 aa).

Carbamoyl phosphate contacts are provided by residues 50 to 53 (STRT), glutamine 77, arginine 101, and 128 to 131 (HPCQ). Residues asparagine 159, aspartate 216, and 220–221 (SM) contribute to the L-ornithine site. Residues 256–257 (CL) and arginine 284 each bind carbamoyl phosphate.

It belongs to the aspartate/ornithine carbamoyltransferase superfamily. OTCase family.

Its subcellular location is the cytoplasm. It catalyses the reaction carbamoyl phosphate + L-ornithine = L-citrulline + phosphate + H(+). The protein operates within amino-acid biosynthesis; L-arginine biosynthesis; L-arginine from L-ornithine and carbamoyl phosphate: step 1/3. In terms of biological role, reversibly catalyzes the transfer of the carbamoyl group from carbamoyl phosphate (CP) to the N(epsilon) atom of ornithine (ORN) to produce L-citrulline. This is Ornithine carbamoyltransferase from Methylococcus capsulatus (strain ATCC 33009 / NCIMB 11132 / Bath).